Here is an 85-residue protein sequence, read N- to C-terminus: Small integral membrane protein 35 (85 aa).

Residues Ile7–Gly27 form a helical membrane-spanning segment.

The protein resides in the membrane. This is Small integral membrane protein 35 from Mus musculus (Mouse).